The primary structure comprises 232 residues: Adenosylcobinamide-GDP ribazoletransferase (232 aa).

6 helical membrane passes run 31–51, 59–79, 102–122, 126–146, 167–187, and 209–229; these read LPSF…LGAL, VFFL…GFLD, VGPF…NLYL, PFYF…LMAF, LLIS…YIIS, and VTGD…LLIL.

It belongs to the CobS family. Requires Mg(2+) as cofactor.

Its subcellular location is the cell inner membrane. It carries out the reaction alpha-ribazole + adenosylcob(III)inamide-GDP = adenosylcob(III)alamin + GMP + H(+). It catalyses the reaction alpha-ribazole 5'-phosphate + adenosylcob(III)inamide-GDP = adenosylcob(III)alamin 5'-phosphate + GMP + H(+). The protein operates within cofactor biosynthesis; adenosylcobalamin biosynthesis; adenosylcobalamin from cob(II)yrinate a,c-diamide: step 7/7. Functionally, joins adenosylcobinamide-GDP and alpha-ribazole to generate adenosylcobalamin (Ado-cobalamin). Also synthesizes adenosylcobalamin 5'-phosphate from adenosylcobinamide-GDP and alpha-ribazole 5'-phosphate. The sequence is that of Adenosylcobinamide-GDP ribazoletransferase from Thermosipho africanus (strain TCF52B).